Consider the following 678-residue polypeptide: Protein CASP (678 aa).

Over M1 to T619 the chain is Cytoplasmic. Coiled-coil stretches lie at residues L67–S450 and L502–S556. S586 carries the phosphoserine modification. Residues I620–A640 form a helical; Anchor for type IV membrane protein membrane-spanning segment. The Lumenal portion of the chain corresponds to W641–Q678.

This sequence belongs to the CASP family. As to quaternary structure, homodimer; disulfide-linked. Interacts with GOLGA5.

The protein resides in the golgi apparatus membrane. In terms of biological role, may be involved in intra-Golgi retrograde transport. In Pongo abelii (Sumatran orangutan), this protein is Protein CASP (CUTL1).